A 147-amino-acid chain; its full sequence is UPF0306 protein YhbP (147 aa).

This sequence belongs to the UPF0306 family.

In Escherichia coli (strain SMS-3-5 / SECEC), this protein is UPF0306 protein YhbP.